Consider the following 465-residue polypeptide: Pancreatic triacylglycerol lipase (465 aa).

Residues 1–16 (MLPLWTLSLLLGAVAG) form the signal peptide. Intrachain disulfides connect Cys20-Cys26 and Cys107-Cys118. Ser169 serves as the catalytic Nucleophile. The N-linked (GlcNAc...) asparagine glycan is linked to Asn183. Asp193 functions as the Charge relay system in the catalytic mechanism. Ca(2+) is bound by residues Glu204, Arg207, Asp209, and Asp212. A disulfide bridge links Cys254 with Cys278. His280 acts as the Charge relay system in catalysis. 3 disulfides stabilise this stretch: Cys302-Cys313, Cys316-Cys321, and Cys449-Cys465. Residues 355–465 (WRYKVSVTLS…EEVLLTLTPC (111 aa)) form the PLAT domain.

It belongs to the AB hydrolase superfamily. Lipase family. Forms a 1:1 stoichiometric complex with (pro)colipase/CLPS.

The protein localises to the secreted. The catalysed reaction is a triacylglycerol + H2O = a diacylglycerol + a fatty acid + H(+). It catalyses the reaction 1,2,3-tributanoylglycerol + H2O = dibutanoylglycerol + butanoate + H(+). It carries out the reaction 1,2,3-tri-(9Z-octadecenoyl)-glycerol + H2O = di-(9Z)-octadecenoylglycerol + (9Z)-octadecenoate + H(+). The enzyme catalyses all-trans-retinyl hexadecanoate + H2O = all-trans-retinol + hexadecanoate + H(+). The catalysed reaction is 1,2-di-(9Z-octadecenoyl)-glycerol + H2O = (9Z-octadecenoyl)-glycerol + (9Z)-octadecenoate + H(+). Inhibited by bile salts, is reactivated by (pro)colipase/CLPS. Plays an important role in fat metabolism. It preferentially splits the esters of long-chain fatty acids at positions 1 and 3, producing mainly 2-monoacylglycerol and free fatty acids, and shows considerably higher activity against insoluble emulsified substrates than against soluble ones. This is Pancreatic triacylglycerol lipase from Homo sapiens (Human).